Reading from the N-terminus, the 209-residue chain is NAD(P)H dehydrogenase (quinone) (209 aa).

The Flavodoxin-like domain occupies 4 to 199 (VNIIFHSVHA…EMARYQGRHV (196 aa)). FMN contacts are provided by residues 10–15 (SVHAHI) and 87–89 (TRY). A substrate-binding site is contributed by Trp-107. FMN contacts are provided by residues 122-128 (SSGTQHG) and His-143.

Belongs to the WrbA family. Requires FMN as cofactor.

It carries out the reaction a quinone + NADH + H(+) = a quinol + NAD(+). The catalysed reaction is a quinone + NADPH + H(+) = a quinol + NADP(+). This chain is NAD(P)H dehydrogenase (quinone), found in Methanosarcina mazei (strain ATCC BAA-159 / DSM 3647 / Goe1 / Go1 / JCM 11833 / OCM 88) (Methanosarcina frisia).